The primary structure comprises 150 residues: UPF0178 protein Daro_2879 (150 aa).

Belongs to the UPF0178 family.

This chain is UPF0178 protein Daro_2879, found in Dechloromonas aromatica (strain RCB).